A 579-amino-acid chain; its full sequence is 3-hydroxy-3-methylglutaryl-coenzyme A reductase (579 aa).

The interval 1 to 22 (MEVRGGVGQGSAARHPPAPEPS) is disordered. Transmembrane regions (helical) follow at residues 36 to 56 (LPIR…LAYL) and 80 to 100 (AIFG…IAFV). The segment at 101–153 (QSIVSSGDDDEDFLVGSGSSGSAAAPSRQHAQAPAPCELLGSPAAAPEKMPED) is linker. Positions 154–579 (DEEIVASVVA…EKTRQREVDV (426 aa)) are catalytic. The active-site Charge relay system is the Glu-247. A glycan (N-linked (GlcNAc...) asparagine) is linked at Asn-311. Residues Lys-379 and Asp-455 each act as charge relay system in the active site. The chain crosses the membrane as a helical span at residues 524-544 (LLATVVAGGVLAGELSLLSAL). The Proton donor role is filled by His-553. Residues 555–579 (KYNRSSKDVSSTTATEKTRQREVDV) form a disordered region. The N-linked (GlcNAc...) asparagine glycan is linked to Asn-557. The span at 570–579 (EKTRQREVDV) shows a compositional bias: basic and acidic residues.

The protein belongs to the HMG-CoA reductase family.

It localises to the endoplasmic reticulum membrane. The catalysed reaction is (R)-mevalonate + 2 NADP(+) + CoA = (3S)-3-hydroxy-3-methylglutaryl-CoA + 2 NADPH + 2 H(+). The protein operates within metabolic intermediate biosynthesis; (R)-mevalonate biosynthesis; (R)-mevalonate from acetyl-CoA: step 3/3. In terms of biological role, catalyzes the synthesis of mevalonate. The specific precursor of all isoprenoid compounds present in plants. The chain is 3-hydroxy-3-methylglutaryl-coenzyme A reductase (HMGR) from Zea mays (Maize).